The chain runs to 442 residues: Vacuolar zinc transporter ZRC1 (442 aa).

The Cytoplasmic segment spans residues M1–R8. A helical transmembrane segment spans residues I9–M29. The Vacuolar portion of the chain corresponds to S30 to S32. The chain crosses the membrane as a helical span at residues L33–L53. The Cytoplasmic segment spans residues W54–A75. A helical transmembrane segment spans residues E76–I96. Over E97–R112 the chain is Vacuolar. Residues L113–H133 form a helical membrane-spanning segment. The Cytoplasmic portion of the chain corresponds to D134–V235. Short sequence motifs (histidine repeat) lie at residues H141–H145, H163–H167, and H216–H220. Disordered stretches follow at residues H141–L170 and Q208–H227. Over residues E149–L170 the composition is skewed to polar residues. Basic and acidic residues predominate over residues N212–K224. Residues F236–I256 traverse the membrane as a helical segment. At W257–Y265 the chain is on the vacuolar side. A helical transmembrane segment spans residues Y266–L286. The Cytoplasmic portion of the chain corresponds to S287–L442. K357 participates in a covalent cross-link: Glycyl lysine isopeptide (Lys-Gly) (interchain with G-Cter in ubiquitin). A phosphoserine mark is found at S387, S393, and S397. The disordered stretch occupies residues G391–Y419.

Belongs to the cation diffusion facilitator (CDF) transporter (TC 2.A.4) family. SLC30A subfamily.

It localises to the vacuole membrane. The enzyme catalyses Zn(2+)(in) = Zn(2+)(out). In terms of biological role, vacuolar transporter that regulates zinc homeostasis by mediating zinc transport and storage into the vacuole. ZRC1 senses zinc availability in the cytosol, which might be performed through the histidine repeat motifs, and transports zinc from the cytosol to the vacuole if zinc in cytosol is abundant, conferring resistance to zinc toxicity. Plays a role in resistance to zinc shock resulting from sudden influx of zinc into cytoplasm when ZRT1 and ZRT2 are induced in response to zinc depletion. The chain is Vacuolar zinc transporter ZRC1 from Saccharomyces cerevisiae (strain ATCC 204508 / S288c) (Baker's yeast).